Reading from the N-terminus, the 390-residue chain is Leu/Ile/Val-binding protein homolog 6 (390 aa).

An N-terminal signal peptide occupies residues 1 to 21 (MKKIALTALAVFSLAASAAYA).

The protein belongs to the leucine-binding protein family.

Its function is as follows. Component of an amino-acid transport system. The chain is Leu/Ile/Val-binding protein homolog 6 from Brucella abortus (strain 2308).